A 410-amino-acid polypeptide reads, in one-letter code: tRNA-guanine(15) transglycosylase (410 aa).

Residue D87 is the Nucleophile of the active site. D122 and G187 together coordinate substrate.

Belongs to the archaeosine tRNA-ribosyltransferase family. Zn(2+) is required as a cofactor.

It carries out the reaction guanosine(15) in tRNA + 7-cyano-7-deazaguanine = 7-cyano-7-carbaguanosine(15) in tRNA + guanine. It participates in tRNA modification; archaeosine-tRNA biosynthesis. Its function is as follows. Exchanges the guanine residue with 7-cyano-7-deazaguanine (preQ0) at position 15 in the dihydrouridine loop (D-loop) of archaeal tRNAs. The chain is tRNA-guanine(15) transglycosylase from Nanoarchaeum equitans (strain Kin4-M).